Consider the following 472-residue polypeptide: Argininosuccinate lyase (472 aa).

Belongs to the lyase 1 family. Argininosuccinate lyase subfamily.

The protein localises to the cytoplasm. It carries out the reaction 2-(N(omega)-L-arginino)succinate = fumarate + L-arginine. It functions in the pathway amino-acid biosynthesis; L-arginine biosynthesis; L-arginine from L-ornithine and carbamoyl phosphate: step 3/3. The polypeptide is Argininosuccinate lyase (Mycobacterium avium (strain 104)).